The sequence spans 335 residues: Pyridoxal 5'-phosphate synthase subunit PdxS (335 aa).

Asp-30 contributes to the D-ribose 5-phosphate binding site. Lys-87 serves as the catalytic Schiff-base intermediate with D-ribose 5-phosphate. Residue Gly-159 coordinates D-ribose 5-phosphate. Arg-171 provides a ligand contact to D-glyceraldehyde 3-phosphate. D-ribose 5-phosphate is bound by residues Gly-257 and 278-279; that span reads GS.

It belongs to the PdxS/SNZ family. In the presence of PdxT, forms a dodecamer of heterodimers.

It carries out the reaction aldehydo-D-ribose 5-phosphate + D-glyceraldehyde 3-phosphate + L-glutamine = pyridoxal 5'-phosphate + L-glutamate + phosphate + 3 H2O + H(+). It participates in cofactor biosynthesis; pyridoxal 5'-phosphate biosynthesis. Functionally, catalyzes the formation of pyridoxal 5'-phosphate from ribose 5-phosphate (RBP), glyceraldehyde 3-phosphate (G3P) and ammonia. The ammonia is provided by the PdxT subunit. Can also use ribulose 5-phosphate and dihydroxyacetone phosphate as substrates, resulting from enzyme-catalyzed isomerization of RBP and G3P, respectively. This chain is Pyridoxal 5'-phosphate synthase subunit PdxS, found in Thermococcus onnurineus (strain NA1).